The chain runs to 242 residues: Probable 2-phosphosulfolactate phosphatase (242 aa).

It belongs to the ComB family. Mg(2+) serves as cofactor.

It carries out the reaction (2R)-O-phospho-3-sulfolactate + H2O = (2R)-3-sulfolactate + phosphate. The sequence is that of Probable 2-phosphosulfolactate phosphatase from Prochlorococcus marinus (strain NATL2A).